We begin with the raw amino-acid sequence, 109 residues long: MTRWALVVFMVLMLDRVPGTPIPTFQLLPQNYPETTPSSVSSESPSDTTTGPSASWSNSKASPYLDTRVILSLDVPIGLLRILLEQARNKAARNQAATNAQILARVGRR.

A signal peptide spans 1-22 (MTRWALVVFMVLMLDRVPGTPI). The propeptide occupies 23 to 67 (PTFQLLPQNYPETTPSSVSSESPSDTTTGPSASWSNSKASPYLDT). The disordered stretch occupies residues 24-60 (TFQLLPQNYPETTPSSVSSESPSDTTTGPSASWSNSK). The segment covering 33–50 (PETTPSSVSSESPSDTTT) has biased composition (low complexity). The span at 51–60 (GPSASWSNSK) shows a compositional bias: polar residues. Val106 is subject to Valine amide; partial.

This sequence belongs to the sauvagine/corticotropin-releasing factor/urotensin I family. In terms of assembly, binds with high affinity to CRF receptors 2-alpha and 2-beta. In terms of processing, glycosylated.

It is found in the secreted. In terms of biological role, suppresses food intake, delays gastric emptying and decreases heat-induced edema. Might represent an endogenous ligand for maintaining homeostasis after stress. The polypeptide is Urocortin-2 (Ucn2) (Rattus norvegicus (Rat)).